A 1372-amino-acid polypeptide reads, in one-letter code: Capping protein, Arp2/3 and myosin-I linker protein 3 (1372 aa).

The interval 126–151 (RGNADTPEGPRDTSPNSETSTSTTHS) is disordered. Over residues 138-151 (TSPNSETSTSTTHS) the composition is skewed to low complexity. 10 LRR repeats span residues 244-264 (SLEE…QKLA), 274-295 (VLHA…SLSQ), 303-323 (GLTK…QALG), 335-357 (SLRY…NALY), 365-385 (ALVH…LGAL), 392-413 (HLTY…EAPP), 424-444 (TLSH…RALL), 455-475 (DLHL…ALQE), 482-501 (CVGS…LTLV), and 509-530 (SLKH…EEIL). 3 disordered regions span residues 865-900 (TLSD…ELGT), 970-1003 (KLRH…RQEN), and 1024-1372 (ESSS…PGTD). Residues 982-995 (PRTTPPGPGRPSMP) show a composition bias toward pro residues. The segment at 1040–1073 (SEAPLPPLQKKRRRGLFHFRRPRSFKGDRGPGSP) is necessary for localization at the cell membrane. Over residues 1048 to 1063 (QKKRRRGLFHFRRPRS) the composition is skewed to basic residues. Positions 1079–1098 (LPPPPPPPPTQESPPSPDPP) are enriched in pro residues. Residues 1099–1109 (SLGNNSSPCWS) show a composition bias toward low complexity. Basic and acidic residues-rich tracts occupy residues 1163–1177 (ERAK…REGP) and 1219–1229 (RRAEATWHIAE). The segment covering 1233–1244 (PNHSCQSPSPAS) has biased composition (polar residues). Residues 1348-1361 (QSCDKLEPDRRRPP) show a composition bias toward basic and acidic residues.

This sequence belongs to the CARMIL family. Widely expressed, with much higher levels in fetal tissues than in adult ones. Up-regulated in certain cancer tissues.

It is found in the cytoplasm. Its subcellular location is the cell membrane. The sequence is that of Capping protein, Arp2/3 and myosin-I linker protein 3 from Homo sapiens (Human).